A 282-amino-acid chain; its full sequence is DNA processing protein DprA (282 aa).

This sequence belongs to the DprA/Smf family. Homodimer; forms tail-to-tail dimers, forms nucleoprotein complex (NPC) which requires at least 30 nucleotides (nt) of ssDNA becoming optimal with 50 nt. Interacts with RecA, forms mixed DprA-RecA-ssDNA filaments. Interacts with ComFA and ComFC.

The protein resides in the cytoplasm. Functionally, protein that helps load RecA onto ssDNA during transformation. Required for DNA transformation. Not required for DNA uptake but for a later stage of transformation. Thought to interact at the cell pole with newly imported transforming ssDNA which it binds cooperatively, protecting linear and circular ssDNA from nuclease action. Forms bridges between DNA segments. Favors the loading of RecA onto ssDNA and formation of RecA-DNA filaments, triggering RecA-catalysis of ATP-driven homologous DNA pairing. The polypeptide is DNA processing protein DprA (Streptococcus pneumoniae (strain ATCC BAA-255 / R6)).